We begin with the raw amino-acid sequence, 330 residues long: Type II restriction enzyme Cfr9I (330 aa).

The protein belongs to the XcyI type II restriction endonuclease family. Mg(2+) is required as a cofactor.

It catalyses the reaction Endonucleolytic cleavage of DNA to give specific double-stranded fragments with terminal 5'-phosphates.. Its function is as follows. An E and P subtype restriction enzyme that recognizes the double-stranded sequence 5'-CCCGGG-3' and cleaves after C-1. The protein is Type II restriction enzyme Cfr9I (cfr9IR) of Citrobacter freundii.